The following is a 1472-amino-acid chain: MARLAAVLWSLCVTAILVTSATQGLSRAGLPFGLMRRELACEGYPIELRCPGSDVIMVENANYGRTDDKICDADPFQMENVQCYLPDAFKIMSQRCNNRTQCVVVAGSDAFPDPCPGTYKYLEVQYDCVPYKVKQKVFVCPGTLQKVLEPTSTHESEHQSGAWCKDPLQAGDRIYVMPWIPYRTDTLTEYASWEDYVAARHTTTYRLPNRVDGTGFVVYDGAVFYNKERTRNIVKYDLRTRIKSGETVINTANYHDTSPYRWGGKTDIDLAVDENGLWVIYATEGNNGRLVVSQLNPYTLRFEGTWETGYDKRSASNAFMVCGVLYVLRSVYVDDDSEAAGNRVDYAFNTNANREEPVSLAFPNPYQFVSSVDYNPRDNQLYVWNNYFVVRYSLEFGPPDPSAGPATSPPLSTTTTARPTPLTSTASPAATTPLRRAPLTTHPVGAINQLGPDLPPATAPAPSTRRPPAPNLHVSPELFCEPREVRRVQWPATQQGMLVERPCPKGTRGIASFQCLPALGLWNPRGPDLSNCTSPWVNQVAQKIKSGENAANIASELARHTRGSIYAGDVSSSVKLMEQLLDILDAQLQALRPIERESAGKNYNKMHKRERTCKDYIKAVVETVDNLLRPEALESWKDMNATEQAHTATMLLDVLEEGAFLLADNVREPARFLAAKQNVVLEVTVLNTEGQVQELVFPQEYPSENSIQLSANTIKQNSRNGVVKVVFILYNNLGLFLSTENATVKLAGEAGSGGPGGASLVVNSQVIAASINKESSRVFLMDPVIFTVAHLEAKNHFNANCSFWNYSERSMLGYWSTQGCRLVESNKTHTTCACSHLTNFAVLMAHREIYQGRINELLLSVITWVGIVISLVCLAICISTFCFLRGLQTDRNTIHKNLCINLFLAELLFLVGIDKTQYEIACPIFAGLLHYFFLAAFSWLCLEGVHLYLLLVEVFESEYSRTKYYYLGGYCFPALVVGIAAAIDYRSYGTEKACWLRVDNYFIWSFIGPVSFVIVVNLVFLMVTLHKMVRSSSVLKPDSSRLDNIKSWALGAIALLFLLGLTWAFGLLFINKESVVMAYLFTTFNAFQGVFIFVFHCALQKKVHKEYSKCLRHSYCCIRSPPGGAHGSLKTSAMRSNARYYTGTQSRIRRMWNDTVRKQTESSFMAGDINSTPTLNRGTMGNHLLTNPVLQPRGGTSPYNTLIAESVGFNPSSPPVFNSPGSYREPKHPLGGREACGMDTLPLNGNFNNSYSLRSGDFPPGDGAPEPPRGRNLADAAAFEKMIISELVHNNLRGGSSGAKGPPPPEPPVPPVPGGSGEEEAGGPGADRAEIELLYKALEEPLLLPRAQSVLYQSDLDESESCTAEDGATSRPLSSPPGRDSLYASGANLRDSPSYPDSSPEGPSEALPPPPPAPPGPPEIYYTSRPPALVARNPLQGYYQVRRPSHEGYLAAPGLEGPGPDGDGQMQLVTSL.

An N-terminal signal peptide occupies residues 1–24 (MARLAAVLWSLCVTAILVTSATQG). At 25–857 (LSRAGLPFGL…EIYQGRINEL (833 aa)) the chain is on the extracellular side. In terms of domain architecture, SUEL-type lectin spans 40–129 (ACEGYPIELR…KYLEVQYDCV (90 aa)). Intrachain disulfides connect cysteine 41-cysteine 71, cysteine 50-cysteine 128, cysteine 83-cysteine 115, cysteine 96-cysteine 102, and cysteine 140-cysteine 322. Glutamate 42 is a binding site for alpha-L-rhamnose. Asparagine 98 carries an N-linked (GlcNAc...) asparagine glycan. 117–120 (GTYK) provides a ligand contact to alpha-L-rhamnose. The region spanning 139–398 (VCPGTLQKVL…VVRYSLEFGP (260 aa)) is the Olfactomedin-like domain. Positions 400–468 (DPSAGPATSP…APAPSTRRPP (69 aa)) are disordered. Over residues 405–441 (PATSPPLSTTTTARPTPLTSTASPAATTPLRRAPLTT) the composition is skewed to low complexity. The span at 453 to 468 (DLPPATAPAPSTRRPP) shows a compositional bias: pro residues. 2 cysteine pairs are disulfide-bonded: cysteine 480–cysteine 515 and cysteine 503–cysteine 532. N-linked (GlcNAc...) asparagine glycosylation is found at asparagine 531, asparagine 640, asparagine 741, asparagine 800, asparagine 805, and asparagine 826. The 182-residue stretch at 669 to 850 (PARFLAAKQN…AVLMAHREIY (182 aa)) folds into the GAIN-B domain. Intrachain disulfides connect cysteine 801–cysteine 832 and cysteine 820–cysteine 834. The interval 801-850 (CSFWNYSERSMLGYWSTQGCRLVESNKTHTTCACSHLTNFAVLMAHREIY) is GPS. Residues 858–878 (LLSVITWVGIVISLVCLAICI) form a helical membrane-spanning segment. The Cytoplasmic segment spans residues 879-892 (STFCFLRGLQTDRN). A helical transmembrane segment spans residues 893–913 (TIHKNLCINLFLAELLFLVGI). Residues 914–919 (DKTQYE) are Extracellular-facing. The chain crosses the membrane as a helical span at residues 920–940 (IACPIFAGLLHYFFLAAFSWL). Residues 941-963 (CLEGVHLYLLLVEVFESEYSRTK) are Cytoplasmic-facing. The chain crosses the membrane as a helical span at residues 964–984 (YYYLGGYCFPALVVGIAAAID). At 985 to 1001 (YRSYGTEKACWLRVDNY) the chain is on the extracellular side. A helical membrane pass occupies residues 1002-1022 (FIWSFIGPVSFVIVVNLVFLM). Residues 1023-1049 (VTLHKMVRSSSVLKPDSSRLDNIKSWA) are Cytoplasmic-facing. A helical transmembrane segment spans residues 1050–1070 (LGAIALLFLLGLTWAFGLLFI). Residues 1071–1074 (NKES) lie on the Extracellular side of the membrane. The chain crosses the membrane as a helical span at residues 1075 to 1095 (VVMAYLFTTFNAFQGVFIFVF). The Cytoplasmic segment spans residues 1096 to 1472 (HCALQKKVHK…DGQMQLVTSL (377 aa)). Arginine 1193 is modified (omega-N-methylarginine). Phosphoserine is present on serine 1219. Disordered stretches follow at residues 1247 to 1271 (FNNS…PRGR), 1291 to 1325 (NLRG…GGPG), 1358 to 1427 (ESES…SRPP), and 1449 to 1472 (YLAA…VTSL). Pro residues-rich tracts occupy residues 1301-1313 (GPPP…PPVP) and 1406-1418 (ALPP…PGPP). Serine 1471 bears the Phosphoserine mark.

The protein belongs to the G-protein coupled receptor 2 family. Adhesion G-protein coupled receptor (ADGR) subfamily. As to quaternary structure, forms a heterodimer, consisting of a large extracellular region (p120) non-covalently linked to a seven-transmembrane moiety (p85). Interacts with syntaxin and with proteins of the SHANK family via the PDZ domain. Interacts (via extracellular domain) with FLRT1, FLRT2 and FLRT3 (via extracellular domain). Post-translationally, autoproteolytically cleaved into 2 subunits, an extracellular subunit and a seven-transmembrane subunit. This proteolytic processing takes place early in the biosynthetic pathway, either in the endoplasmic reticulum or in the early compartment of the Golgi apparatus. In terms of tissue distribution, brain-specific expression but low levels are also detected in kidney, lung and spleen.

Its subcellular location is the cell membrane. It localises to the cell projection. It is found in the axon. The protein resides in the growth cone. The protein localises to the synapse. Its subcellular location is the presynaptic cell membrane. It localises to the synaptosome. In terms of biological role, calcium-independent receptor of high affinity for alpha-latrotoxin, an excitatory neurotoxin present in black widow spider venom which triggers massive exocytosis from neurons and neuroendocrine cells. Receptor for TENM2 that mediates heterophilic synaptic cell-cell contact and postsynaptic specialization. Receptor probably implicated in the regulation of exocytosis. The sequence is that of Adhesion G protein-coupled receptor L1 from Bos taurus (Bovine).